A 948-amino-acid polypeptide reads, in one-letter code: Coiled-coil domain-containing protein 66 (948 aa).

2 positions are modified to phosphothreonine: threonine 115 and threonine 121. Serine 369 is modified (phosphoserine). Residues 458–499 (DRRRQKQLEHQKAITAQVEEKRRKKQLEEEQRKKEEQEEELR) are disordered. Residues 467-558 (HQKAITAQVE…EQRIRELAQK (92 aa)) are a coiled coil. Residues 570–948 (GVDTIQMEYN…NQEESFGSSF (379 aa)) form a mediates localization to cilia, centrosomes and spindle microtubules and the interaction with PCM1, CEP290, CEP104 and CSPP1 region. Phosphoserine is present on serine 606. Disordered stretches follow at residues 690-713 (QTKH…KRYI) and 788-808 (SFSK…RTQQ).

In terms of assembly, homodimer; disulfide-linked. Interacts with CEP290. Interacts with PCM1. Interacts with ARMC9, TOGARAM1, CSPP1 and CEP104. Interacts with CDK5RAP2, CEP152, CEP192, TBG1 and PRC1. As to expression, widely expressed (at protein level). Expressed in retina, mainly in photoreceptors but also in outer plexiform and ganglion cell layers (at protein level).

The protein localises to the cytoplasm. It is found in the cytoskeleton. Its subcellular location is the microtubule organizing center. It localises to the centrosome. The protein resides in the centriolar satellite. The protein localises to the cell projection. It is found in the cilium. Its subcellular location is the cilium basal body. It localises to the cilium axoneme. The protein resides in the photoreceptor inner segment. The protein localises to the photoreceptor outer segment. It is found in the spindle. Its subcellular location is the midbody. In terms of biological role, microtubule-binding protein required for ciliogenesis. May function in ciliogenesis by mediating the transport of proteins like BBS4 to the cilium, but also through the organization of the centriolar satellites. Required for the assembly of signaling-competent cilia with proper structure and length. Mediates this function in part by regulating transition zone assembly and basal body recruitment of the IFT-B complex. Cooperates with the ciliopathy proteins CSPP1 and CEP104 during cilium length regulation. Plays two important roles during cell division. First, is required for mitotic progression via regulation of spindle assembly, organization and orientation, levels of spindle microtubules (MTs), kinetochore-fiber integrity, and chromosome alignment. Second, functions during cytokinesis in part by regulating assembly and organization of central spindle and midbody MTs. Plays a role in retina morphogenesis and/or homeostasis. The chain is Coiled-coil domain-containing protein 66 from Homo sapiens (Human).